The sequence spans 1238 residues: Receptor-type tyrosine-protein phosphatase eta (1238 aa).

Residues 1-28 (MKPAARETRTPPRSPGLRWALLPLLLLL) form the signal peptide. Over 29-876 (RQGQVLCAGA…LPQDPGVICG (848 aa)) the chain is Extracellular. Residues 39–122 (APNPIFDIEA…LNKTITTEPW (84 aa)) form the Fibronectin type-III 1 domain. N-linked (GlcNAc...) asparagine glycans are attached at residues Asn62, Asn78, Asn85, Asn90, Asn110, Asn114, Asn145, Asn164, Asn173, Asn182, Asn198, Asn207, Asn244, Asn253, Asn267, Asn278, Asn313, Asn317, Asn333, Asn366, Asn379, Asn398, Asn403, Asn437, Asn452, Asn488, Asn506, Asn538, Asn572, Asn576, Asn662, Asn668, Asn685, Asn691, Asn725, Asn811, and Asn838. Residues 170–266 (PGTNNSFAFP…GQPRNKVFKT (97 aa)) enclose the Fibronectin type-III 2 domain. 6 Fibronectin type-III domains span residues 270 to 358 (QVSD…SPDQ), 359 to 443 (VSDF…TDPS), 444 to 527 (AVTD…TQYT), 528 to 621 (RPSS…TEPE), 622 to 718 (PVTS…TDPP), and 717 to 803 (PPTP…SEVL). A helical transmembrane segment spans residues 877–897 (AVFGCIFGALAITAVGGFIFW). Over 898-1238 (RKKRTDAKNN…MFGKTNGYIA (341 aa)) the chain is Cytoplasmic. Residue Ser910 is modified to Phosphoserine. The region spanning 942–1199 (FAEEYEDLKL…VFLNQCVLDI (258 aa)) is the Tyrosine-protein phosphatase domain. Residues Asp1106, 1140 to 1146 (CSAGVGR), and Gln1184 contribute to the substrate site. Cys1140 functions as the Phosphocysteine intermediate in the catalytic mechanism.

It belongs to the protein-tyrosine phosphatase family. Receptor class 3 subfamily. In terms of assembly, monomer. Interacts with CTNNB1 (phosphorylated) and JUP (phosphorylated). Interacts with FLT3 (phosphorylated). Interacts with GAB1 and GRB2. Expressed at high levels in brain, kidney, spleen and intestine, and at lower levels in liver, lung, thymus and heart. Expressed at a high level in the myeloid cell line FDC-P2, and at a lower level in the pre-B lymphoid cell line WEHI-231 and the T hybridoma cell line HB21.7.31. Not expressed in the fibroblast cell line NIH3T3 or the erythroid cell line F5-5. Expressed in macrophages.

The protein localises to the cell membrane. The protein resides in the cell projection. It is found in the ruffle membrane. Its subcellular location is the cell junction. The enzyme catalyses O-phospho-L-tyrosyl-[protein] + H2O = L-tyrosyl-[protein] + phosphate. Functionally, tyrosine phosphatase which dephosphorylates or contributes to the dephosphorylation of CTNND1, FLT3, PDGFRB, MET, KDR, LYN, SRC, MAPK1, MAPK3, EGFR, TJP1, OCLN, PIK3R1 and PIK3R2. Plays a role in cell adhesion, migration, proliferation and differentiation. Has a role in megakaryocytes and platelet formation. Involved in vascular development. May be involved in the mechanism of contact inhibition of cell growth. Regulator of macrophage adhesion and spreading. Positively affects cell-matrix adhesion. Positive regulator of platelet activation and thrombosis. Negative regulator of cell proliferation. Negative regulator of PDGF-stimulated cell migration; through dephosphorylation of PDGFR. Positive regulator of endothelial cell survival, as well as of VEGF-induced SRC and AKT activation; through KDR dephosphorylation. Negative regulator of EGFR signaling pathway; through EGFR dephosphorylation. Enhances the barrier function of epithelial junctions during reassembly. Negatively regulates T-cell receptor (TCR) signaling. Upon T-cell TCR activation, it is up-regulated and excluded from the immunological synapses, while upon T-cell-antigen presenting cells (APC) disengagement, it is no longer excluded and can dephosphorylate PLCG1 and LAT to down-regulate prolongation of signaling. The sequence is that of Receptor-type tyrosine-protein phosphatase eta (Ptprj) from Mus musculus (Mouse).